Consider the following 154-residue polypeptide: MSEKYIVTWDMLQIHTRILAHRLLKTKNAWNGIIAVSRGGLVPSAILARELGIRCVDTVCIASYNYDCLQKNRKIIKKARGDGEKIIVVDDLVDTGGTAKIIRNLYPKAYFVTIFAKPLGRLLVDDYIIDIDQNIWIEQPWDMSISYISPLIKK.

5-phospho-alpha-D-ribose 1-diphosphate-binding positions include 38-39, K71, and 90-98; these read RG and DDLVDTGGT. Residue K71 participates in GMP binding. D91 serves as a coordination point for Mg(2+). 2 residues coordinate guanine: D94 and I137. 2 residues coordinate xanthine: D94 and I137. GMP-binding positions include 94-98 and 136-137; these read DTGGT and WI.

The protein belongs to the purine/pyrimidine phosphoribosyltransferase family. XGPT subfamily. As to quaternary structure, homotetramer. Mg(2+) serves as cofactor.

The protein localises to the cell inner membrane. It carries out the reaction GMP + diphosphate = guanine + 5-phospho-alpha-D-ribose 1-diphosphate. The enzyme catalyses XMP + diphosphate = xanthine + 5-phospho-alpha-D-ribose 1-diphosphate. The catalysed reaction is IMP + diphosphate = hypoxanthine + 5-phospho-alpha-D-ribose 1-diphosphate. It participates in purine metabolism; GMP biosynthesis via salvage pathway; GMP from guanine: step 1/1. The protein operates within purine metabolism; XMP biosynthesis via salvage pathway; XMP from xanthine: step 1/1. In terms of biological role, purine salvage pathway enzyme that catalyzes the transfer of the ribosyl-5-phosphate group from 5-phospho-alpha-D-ribose 1-diphosphate (PRPP) to the N9 position of the 6-oxopurines guanine and xanthine to form the corresponding ribonucleotides GMP (guanosine 5'-monophosphate) and XMP (xanthosine 5'-monophosphate), with the release of PPi. To a lesser extent, also acts on hypoxanthine. The polypeptide is Xanthine-guanine phosphoribosyltransferase (Buchnera aphidicola subsp. Schizaphis graminum (strain Sg)).